Here is a 247-residue protein sequence, read N- to C-terminus: Protein NipSnap homolog 3B (247 aa).

Residues lysine 45 and lysine 57 each carry the N6-succinyllysine modification.

It belongs to the NipSnap family.

In Homo sapiens (Human), this protein is Protein NipSnap homolog 3B (NIPSNAP3B).